Reading from the N-terminus, the 211-residue chain is Transcription antitermination protein NusB (211 aa).

This sequence belongs to the NusB family.

Functionally, involved in transcription antitermination. Required for transcription of ribosomal RNA (rRNA) genes. Binds specifically to the boxA antiterminator sequence of the ribosomal RNA (rrn) operons. The polypeptide is Transcription antitermination protein NusB (Gloeobacter violaceus (strain ATCC 29082 / PCC 7421)).